A 443-amino-acid polypeptide reads, in one-letter code: Protoheme IX farnesyltransferase, mitochondrial (443 aa).

Residues 68-113 (LSQRVKPKPEPPASPFLEHTSSGQARADEDELPSFPAPSRPLSRKP) form a disordered region. 7 consecutive transmembrane segments (helical) span residues 174-194 (AGFA…TSLG), 230-250 (ISPL…VALL), 252-272 (WGVN…YTCC), 286-306 (VGAV…TGSL), 308-328 (AGAL…FNAL), 363-383 (LIAL…FPVI), and 410-430 (LFFC…TCKQ).

This sequence belongs to the UbiA prenyltransferase family.

It localises to the mitochondrion membrane. It carries out the reaction heme b + (2E,6E)-farnesyl diphosphate + H2O = Fe(II)-heme o + diphosphate. Its function is as follows. Converts protoheme IX and farnesyl diphosphate to heme O. This chain is Protoheme IX farnesyltransferase, mitochondrial (Cox10), found in Mus musculus (Mouse).